A 149-amino-acid polypeptide reads, in one-letter code: L-alanine exporter AlaE (149 aa).

The next 4 helical transmembrane spans lie at 16-36 (FAMV…LSGM), 46-66 (LVAI…RDLF), 85-105 (ILAY…VVGA), and 112-132 (AAVS…GYFL).

Belongs to the AlaE exporter family.

Its subcellular location is the cell inner membrane. In terms of biological role, exports L-alanine. The protein is L-alanine exporter AlaE of Shigella flexneri.